Here is a 116-residue protein sequence, read N- to C-terminus: MKITPIHDNILVSLVESNKEEVSQKGIITALANPDKNESAHKGTVVALGAGPAYGKSEKPKYAFGIGDTIYFKEYSGISFEEEGTKYKIISLEDVLAFEKHGNTKTTTVKKGAKKK.

Belongs to the GroES chaperonin family. As to quaternary structure, heptamer of 7 subunits arranged in a ring. Interacts with the chaperonin GroEL.

Its subcellular location is the cytoplasm. Functionally, together with the chaperonin GroEL, plays an essential role in assisting protein folding. The GroEL-GroES system forms a nano-cage that allows encapsulation of the non-native substrate proteins and provides a physical environment optimized to promote and accelerate protein folding. GroES binds to the apical surface of the GroEL ring, thereby capping the opening of the GroEL channel. The polypeptide is Co-chaperonin GroES (Mycoplasma pneumoniae (strain ATCC 29342 / M129 / Subtype 1) (Mycoplasmoides pneumoniae)).